Consider the following 37-residue polypeptide: Large ribosomal subunit protein bL36 (37 aa).

This sequence belongs to the bacterial ribosomal protein bL36 family.

This Brevibacillus brevis (strain 47 / JCM 6285 / NBRC 100599) protein is Large ribosomal subunit protein bL36.